The following is a 501-amino-acid chain: Lysine--tRNA ligase (501 aa).

The Mg(2+) site is built by E411 and E418.

It belongs to the class-II aminoacyl-tRNA synthetase family. As to quaternary structure, homodimer. Requires Mg(2+) as cofactor.

Its subcellular location is the cytoplasm. It carries out the reaction tRNA(Lys) + L-lysine + ATP = L-lysyl-tRNA(Lys) + AMP + diphosphate. The polypeptide is Lysine--tRNA ligase (Pseudomonas aeruginosa (strain LESB58)).